Reading from the N-terminus, the 100-residue chain is Urease subunit gamma (100 aa).

The protein belongs to the urease gamma subunit family. In terms of assembly, heterotrimer of UreA (gamma), UreB (beta) and UreC (alpha) subunits. Three heterotrimers associate to form the active enzyme.

The protein localises to the cytoplasm. It catalyses the reaction urea + 2 H2O + H(+) = hydrogencarbonate + 2 NH4(+). It participates in nitrogen metabolism; urea degradation; CO(2) and NH(3) from urea (urease route): step 1/1. The sequence is that of Urease subunit gamma from Thioalkalivibrio sulfidiphilus (strain HL-EbGR7).